Here is an 887-residue protein sequence, read N- to C-terminus: Translation initiation factor IF-2 (887 aa).

The tract at residues 1 to 259 (MSDEQDQGET…KVGDDRRRGA (259 aa)) is disordered. Residues 62–94 (GRPSAPSRASGGAAAPRGLTAAEQAARQRAVVE) are compositionally biased toward low complexity. 2 stretches are compositionally biased toward basic and acidic residues: residues 95 to 111 (QQRE…EQEK) and 119 to 158 (EEAR…RRAA). Residues 159 to 210 (EASQATAAPPAPAAAASPRAAMPAPTAAPARPGAAPARRTAPVPPATSASET) are compositionally biased toward low complexity. Over residues 250 to 259 (KVGDDRRRGA) the composition is skewed to basic and acidic residues. In terms of domain architecture, tr-type G spans 386–556 (VRPPVVTIMG…LLQAELLDLK (171 aa)). A G1 region spans residues 395–402 (GHVDHGKT). 395-402 (GHVDHGKT) lines the GTP pocket. The tract at residues 420–424 (GITQH) is G2. The segment at 442–445 (DTPG) is G3. GTP is bound by residues 442 to 446 (DTPGH) and 496 to 499 (NKID). Residues 496–499 (NKID) form a G4 region. The segment at 532-534 (SAL) is G5.

It belongs to the TRAFAC class translation factor GTPase superfamily. Classic translation factor GTPase family. IF-2 subfamily.

Its subcellular location is the cytoplasm. Functionally, one of the essential components for the initiation of protein synthesis. Protects formylmethionyl-tRNA from spontaneous hydrolysis and promotes its binding to the 30S ribosomal subunits. Also involved in the hydrolysis of GTP during the formation of the 70S ribosomal complex. The chain is Translation initiation factor IF-2 from Acidiphilium cryptum (strain JF-5).